A 142-amino-acid chain; its full sequence is Peptide methionine sulfoxide reductase MsrB (142 aa).

The 123-residue stretch at 13–135 (EKDWKVELSE…NSLSMTFKGE (123 aa)) folds into the MsrB domain. Residues C52, C55, C101, and C104 each coordinate Zn(2+). C124 (nucleophile) is an active-site residue.

This sequence belongs to the MsrB Met sulfoxide reductase family. The cofactor is Zn(2+).

It carries out the reaction L-methionyl-[protein] + [thioredoxin]-disulfide + H2O = L-methionyl-(R)-S-oxide-[protein] + [thioredoxin]-dithiol. This is Peptide methionine sulfoxide reductase MsrB from Alteromonas mediterranea (strain DSM 17117 / CIP 110805 / LMG 28347 / Deep ecotype).